A 656-amino-acid chain; its full sequence is Nexilin (656 aa).

3 disordered regions span residues Met1–Asp131, Arg165–Cys198, and Thr215–Glu284. Residues Leu11 to Leu26 show a composition bias toward low complexity. Positions Gly27–Leu78 are enriched in basic and acidic residues. Position 80 is a phosphoserine (Ser80). Basic and acidic residues-rich tracts occupy residues Gly103–Asp131, Asn169–Cys198, and Glu216–Val269. Phosphoserine occurs at positions 221, 330, 337, and 345. The residue at position 350 (Thr350) is a Phosphothreonine. 2 disordered regions span residues Asn468–Asn492 and Ala529–Phe564. 2 positions are modified to phosphoserine: Ser544 and Ser549. A Phosphothreonine modification is found at Thr551. The Ig-like domain occupies Pro562–Thr650.

As to quaternary structure, interacts with F-actin. Expressed in brain, testis, spleen and fibroblasts (at protein level). Not detected in liver, kidney or epithelial cells (at protein level).

The protein localises to the cytoplasm. Its subcellular location is the cytoskeleton. The protein resides in the cell junction. It is found in the adherens junction. It localises to the myofibril. The protein localises to the sarcomere. Its subcellular location is the z line. In terms of biological role, involved in regulating cell migration through association with the actin cytoskeleton. Has an essential role in the maintenance of Z line and sarcomere integrity. The sequence is that of Nexilin from Rattus norvegicus (Rat).